The following is a 215-amino-acid chain: WAT1-related protein At3g28060 (215 aa).

The next 5 helical transmembrane spans lie at 48–68 (IIIGSSGEVFWVEYTLIAVAY), 82–102 (FALALSHNVCVSISCAFVSLF), 117–137 (IMLICIVATGVVNSTSYVVES), 146–166 (VFLAMFRPLSIVTAVVLGAIF), and 176–196 (VIGGTLISIGFSVHNSLFHIA). Residues 65–186 (AVAYIVQTHI…IGGTLISIGF (122 aa)) enclose the EamA domain.

The protein belongs to the drug/metabolite transporter (DMT) superfamily. Plant drug/metabolite exporter (P-DME) (TC 2.A.7.4) family.

The protein localises to the membrane. The protein is WAT1-related protein At3g28060 of Arabidopsis thaliana (Mouse-ear cress).